The primary structure comprises 439 residues: Ribosomal protein uS12 methylthiotransferase RimO (439 aa).

In terms of domain architecture, MTTase N-terminal spans 3–118 (KKFYITTLGC…AGKILREKFP (116 aa)). [4Fe-4S] cluster contacts are provided by cysteine 12, cysteine 48, cysteine 81, cysteine 157, cysteine 161, and cysteine 164. The Radical SAM core domain maps to 143–370 (NYSKPYAYVK…RDVHLAILEE (228 aa)). The TRAM domain maps to 373–438 (ESRIGQTYDA…EYDMNGTWIS (66 aa)).

This sequence belongs to the methylthiotransferase family. RimO subfamily. The cofactor is [4Fe-4S] cluster.

It localises to the cytoplasm. It carries out the reaction L-aspartate(89)-[ribosomal protein uS12]-hydrogen + (sulfur carrier)-SH + AH2 + 2 S-adenosyl-L-methionine = 3-methylsulfanyl-L-aspartate(89)-[ribosomal protein uS12]-hydrogen + (sulfur carrier)-H + 5'-deoxyadenosine + L-methionine + A + S-adenosyl-L-homocysteine + 2 H(+). In terms of biological role, catalyzes the methylthiolation of an aspartic acid residue of ribosomal protein uS12. The chain is Ribosomal protein uS12 methylthiotransferase RimO from Leptospira borgpetersenii serovar Hardjo-bovis (strain L550).